The sequence spans 542 residues: MEQNLPSRITKLIKKSESGDFASSYQLYKVFGSKEYGVEPDEKMSDYFKELSAKQLEGGQLRVADIHLENYKGFESLIMDFSMKKNSTILVGNNGCGKSTILDAIQKGLTHLSSRLSTRSHNGDGIEKHELRKGQNYASIAINYDYMGIRFPMIIATTEPGYEDRAKSNYSGINELGSIFKTAHSINPNVSFPLIAMYTVERANDVSTRDIENSEEIKEAQIWDKFKAYNKSLTGKADFKLFFRWFKELIEIENSDNADITALRAEIRAKEKDLDNPLLKALLAENKNSETTKKLLEDHQNSLKVLKEKLNSYYSVNSKTLHTVEDAMYSFLPGFSNLKLQRAPLDLIVDKNNVSLSVLQLSQGEKTILALIADIARRLTLLNPNSVNPLDGTGIVLIDEIDLHLHPSWQQNIIPRLEKTFKNIQFIVTTHSPQVCHTIDSQNIWLLKNGQKFKAPKGVRGAISSWVLENLFEVAQRPPEDKYTKLLQEYKNLVFSEKYASEDARKLGATLSQHFGPDDETLVELKLEIEKRIWEDDFEKDQ.

Positions 92–99 match the ATP-binding motif; it reads GNNGCGKS.

Probable ATPase component of antiviral defense system retron Ec83, composed of a non-coding RNA (ncRNA), a reverse transcriptase (RT), this protein and a putative HNH endonuclease. Expression of retron Ec83 confers protection against bacteriophage T2, T4 and T6. At multiplicity of infection (MOI) of 0.02 cultures slow growth when infected with T4 but do not collapse, at MOI 2 cultures enter growth stasis. The polypeptide is Retron Ec83 probable ATPase (Escherichia coli).